We begin with the raw amino-acid sequence, 783 residues long: DNA polymerase II (783 aa).

Belongs to the DNA polymerase type-B family.

It carries out the reaction DNA(n) + a 2'-deoxyribonucleoside 5'-triphosphate = DNA(n+1) + diphosphate. Its activity is regulated as follows. DNA polymerase II activity is regulated by the lexA gene during the SOS response. Its function is as follows. Thought to be involved in DNA repair and/or mutagenesis. Its processivity is enhanced by the beta sliding clamp (dnaN) and clamp loader. This chain is DNA polymerase II (polB), found in Escherichia coli (strain K12).